We begin with the raw amino-acid sequence, 348 residues long: MDLRGRPKCYSLHLGILPFIVLVLVFFGYGFLSHKIQEFRNPGGETCMATRQTDVQKVVSVPRMAYPQPNVLTPIRNDVLVFTPWLAPIIWEGTFNIDILNEQFKLQNTTIGLTVFAIKKYVVFLKLFLETAEQHFMVGHKVIYYVFTDRPSDVPQVPLGAGRKLVVLTVRNYTRWQDVSMHRMEMISHFSEQRFQHEVDYLVCGDVDMKFSDHVGVEILSALFGTLHPGFYRSRRESFTYERRPKSQAYIPRDEGDFYYAGGFFGGSVVEVHHLTKACHQAMVEDQANGIEAVWHDESHLNKYLLYHKPTKVLSPEYVWDQKLLGWPSIMKKLRYVAVPKNHQAIRN.

At 1 to 11 (MDLRGRPKCYS) the chain is on the cytoplasmic side. The chain crosses the membrane as a helical; Signal-anchor for type II membrane protein span at residues 12 to 32 (LHLGILPFIVLVLVFFGYGFL). Over 33-348 (SHKIQEFRNP…VPKNHQAIRN (316 aa)) the chain is Lumenal. Asn-108 carries N-linked (GlcNAc...) asparagine glycosylation. UDP-N-acetyl-alpha-D-galactosamine contacts are provided by residues 116 to 118 (FAI), Tyr-121, and 206 to 208 (DVD). Residues Asp-206 and Asp-208 each coordinate Mn(2+). An alpha-L-fucosyl-(1-&gt;2)-beta-D-galactosyl derivative-binding residues include His-228, Thr-240, Glu-298, and Asp-321. Glu-298 acts as the Nucleophile in catalysis.

The protein belongs to the glycosyltransferase 6 family. It depends on Mn(2+) as a cofactor. As to expression, tongue, esophagus, large intestine, stomach, caecum, pancreas, uterus, seminal vesicle, submaxillary gland, parotid gland, thyroid gland, parathyroid gland, salivary gland and thymus (at protein level). Esophagus, large intestine, stomach, kidney, urinary bladder, uterus and thymus.

Its subcellular location is the golgi apparatus. The protein resides in the golgi stack membrane. The protein localises to the secreted. It catalyses the reaction an alpha-L-fucosyl-(1-&gt;2)-beta-D-galactosyl derivative + UDP-N-acetyl-alpha-D-galactosamine = an N-acetyl-alpha-D-galactosaminyl-(1-&gt;3)-[alpha-L-fucosyl-(1-&gt;2)]-beta-D-galactosyl derivative + UDP + H(+). It carries out the reaction an alpha-L-fucosyl-(1-&gt;2)-beta-D-galactosyl derivative + UDP-alpha-D-galactose = an alpha-D-galactosyl-(1-&gt;3)-[alpha-L-fucosyl-(1-&gt;2)]-beta-D-galactosyl derivative + UDP + H(+). It functions in the pathway protein modification; protein glycosylation. Its function is as follows. Possesses strong A transferase activity and weak B transferase activity. The protein is Histo-blood group ABO system transferase 1 (Abo) of Rattus norvegicus (Rat).